The primary structure comprises 362 residues: Probable endopolygalacturonase B (362 aa).

The N-terminal stretch at 1 to 20 (MHFLQNAFVAATMGAAPAAA) is a signal peptide. The propeptide occupies 21-25 (TPLEK). An intrachain disulfide couples Cys28 to Cys43. 6 PbH1 repeats span residues 155–184 (ADHL…DIGQ), 185–206 (STYI…AINS), 207–227 (GEHI…SIGS), 236–257 (VNDV…RIKT), 265–287 (VENV…VVEQ), and 299–344 (TNGV…DVTG). Catalysis depends on Asp199, which acts as the Proton donor. Cys201 and Cys217 are disulfide-bonded. His221 is a catalytic residue. A disulfide bridge links Cys327 with Cys332. Residue Asn334 is glycosylated (N-linked (GlcNAc...) asparagine). Residues Cys351 and Cys360 are joined by a disulfide bond.

The protein belongs to the glycosyl hydrolase 28 family.

The protein localises to the secreted. It catalyses the reaction (1,4-alpha-D-galacturonosyl)n+m + H2O = (1,4-alpha-D-galacturonosyl)n + (1,4-alpha-D-galacturonosyl)m.. Its function is as follows. Involved in maceration and soft-rotting of plant tissue. Hydrolyzes the 1,4-alpha glycosidic bonds of de-esterified pectate in the smooth region of the plant cell wall. The protein is Probable endopolygalacturonase B (pgaB) of Aspergillus kawachii (White koji mold).